The primary structure comprises 73 residues: Hypotensin-like peptide (73 aa).

An N-terminal signal peptide occupies residues 1 to 25 (MKMMIAIVFVSILLLMFSLSSTAMG).

In terms of tissue distribution, expressed by the venom gland.

The protein resides in the secreted. Functionally, may potentiate the hypotensive effect of bradykinin. The chain is Hypotensin-like peptide from Tityus serrulatus (Brazilian scorpion).